The following is a 380-amino-acid chain: Chorismate synthase (380 aa).

An NADP(+)-binding site is contributed by arginine 49. FMN-binding positions include glycine 288, lysine 303–serine 307, and arginine 330.

This sequence belongs to the chorismate synthase family. The cofactor is FMNH2.

It catalyses the reaction 5-O-(1-carboxyvinyl)-3-phosphoshikimate = chorismate + phosphate. Its pathway is metabolic intermediate biosynthesis; chorismate biosynthesis; chorismate from D-erythrose 4-phosphate and phosphoenolpyruvate: step 7/7. Catalyzes the anti-1,4-elimination of the C-3 phosphate and the C-6 proR hydrogen from 5-enolpyruvylshikimate-3-phosphate (EPSP) to yield chorismate, which is the branch point compound that serves as the starting substrate for the three terminal pathways of aromatic amino acid biosynthesis. This reaction introduces a second double bond into the aromatic ring system. This Aeropyrum pernix (strain ATCC 700893 / DSM 11879 / JCM 9820 / NBRC 100138 / K1) protein is Chorismate synthase.